Here is a 180-residue protein sequence, read N- to C-terminus: MILNDRKIRELIESKELLIDPLDAVQIQPSSVDLRLGNDFLIYPEDIEILDVRNPDLHNQLKKVVADDEGFIIQPKQFILATTREYIKLPDYLTAFVEGRSSLGRLGLFIENAGWVDAGFEGNITLEFYNANSRPLKIYPGMRICQLVFAKMEEPAENPYRGKYQGQRGTTASRIFLDKD.

DCTP-binding positions include 100-105 (RSSLGR), Asp117, 125-127 (TLE), Gln146, Tyr160, and Gln167. The active-site Proton donor/acceptor is Glu127.

It belongs to the dCTP deaminase family. Homotrimer.

The enzyme catalyses dCTP + 2 H2O = dUMP + NH4(+) + diphosphate. It participates in pyrimidine metabolism; dUMP biosynthesis; dUMP from dCTP: step 1/1. In terms of biological role, bifunctional enzyme that catalyzes both the deamination of dCTP to dUTP and the hydrolysis of dUTP to dUMP without releasing the toxic dUTP intermediate. This chain is dCTP deaminase, dUMP-forming, found in Persephonella marina (strain DSM 14350 / EX-H1).